Here is a 182-residue protein sequence, read N- to C-terminus: ATP synthase subunit b, chloroplastic (182 aa).

The chain crosses the membrane as a helical span at residues 33–55 (VLNIMLLLFGLIYVLKQFLGSLL).

This sequence belongs to the ATPase B chain family. F-type ATPases have 2 components, F(1) - the catalytic core - and F(0) - the membrane proton channel. F(1) has five subunits: alpha(3), beta(3), gamma(1), delta(1), epsilon(1). F(0) has four main subunits: a(1), b(1), b'(1) and c(10-14). The alpha and beta chains form an alternating ring which encloses part of the gamma chain. F(1) is attached to F(0) by a central stalk formed by the gamma and epsilon chains, while a peripheral stalk is formed by the delta, b and b' chains.

It is found in the plastid. It localises to the chloroplast thylakoid membrane. Functionally, f(1)F(0) ATP synthase produces ATP from ADP in the presence of a proton or sodium gradient. F-type ATPases consist of two structural domains, F(1) containing the extramembraneous catalytic core and F(0) containing the membrane proton channel, linked together by a central stalk and a peripheral stalk. During catalysis, ATP synthesis in the catalytic domain of F(1) is coupled via a rotary mechanism of the central stalk subunits to proton translocation. Component of the F(0) channel, it forms part of the peripheral stalk, linking F(1) to F(0). The protein is ATP synthase subunit b, chloroplastic of Antithamnion sp. (Red alga).